The chain runs to 144 residues: Large ribosomal subunit protein uL15 (144 aa).

The interval 1–53 (MRLNTLSPAEGAKHAPKRLGRGIGSGLGKTGGRGHKGQKSRSGGGVRRGFEGG) is disordered. The span at 21–31 (RGIGSGLGKTG) shows a compositional bias: gly residues.

It belongs to the universal ribosomal protein uL15 family. In terms of assembly, part of the 50S ribosomal subunit.

Functionally, binds to the 23S rRNA. This chain is Large ribosomal subunit protein uL15, found in Pectobacterium carotovorum subsp. carotovorum (strain PC1).